Here is a 338-residue protein sequence, read N- to C-terminus: Holliday junction branch migration complex subunit RuvB (338 aa).

A large ATPase domain (RuvB-L) region spans residues 4-187 (ADKDRLVSGD…FGISEHMAYY (184 aa)). Residues Leu26, Arg27, Gly68, Lys71, Thr72, Thr73, 134–136 (EDF), Arg177, Tyr187, and Arg224 contribute to the ATP site. Residue Thr72 coordinates Mg(2+). The small ATPAse domain (RuvB-S) stretch occupies residues 188–258 (SADDLSEIVK…MVDHALDQLQ (71 aa)). Residues 261–338 (QQGLDQIDRK…AHMGMSAEQH (78 aa)) form a head domain (RuvB-H) region. Positions 316 and 321 each coordinate DNA.

It belongs to the RuvB family. In terms of assembly, homohexamer. Forms an RuvA(8)-RuvB(12)-Holliday junction (HJ) complex. HJ DNA is sandwiched between 2 RuvA tetramers; dsDNA enters through RuvA and exits via RuvB. An RuvB hexamer assembles on each DNA strand where it exits the tetramer. Each RuvB hexamer is contacted by two RuvA subunits (via domain III) on 2 adjacent RuvB subunits; this complex drives branch migration. In the full resolvosome a probable DNA-RuvA(4)-RuvB(12)-RuvC(2) complex forms which resolves the HJ.

Its subcellular location is the cytoplasm. It carries out the reaction ATP + H2O = ADP + phosphate + H(+). The RuvA-RuvB-RuvC complex processes Holliday junction (HJ) DNA during genetic recombination and DNA repair, while the RuvA-RuvB complex plays an important role in the rescue of blocked DNA replication forks via replication fork reversal (RFR). RuvA specifically binds to HJ cruciform DNA, conferring on it an open structure. The RuvB hexamer acts as an ATP-dependent pump, pulling dsDNA into and through the RuvAB complex. RuvB forms 2 homohexamers on either side of HJ DNA bound by 1 or 2 RuvA tetramers; 4 subunits per hexamer contact DNA at a time. Coordinated motions by a converter formed by DNA-disengaged RuvB subunits stimulates ATP hydrolysis and nucleotide exchange. Immobilization of the converter enables RuvB to convert the ATP-contained energy into a lever motion, pulling 2 nucleotides of DNA out of the RuvA tetramer per ATP hydrolyzed, thus driving DNA branch migration. The RuvB motors rotate together with the DNA substrate, which together with the progressing nucleotide cycle form the mechanistic basis for DNA recombination by continuous HJ branch migration. Branch migration allows RuvC to scan DNA until it finds its consensus sequence, where it cleaves and resolves cruciform DNA. This is Holliday junction branch migration complex subunit RuvB from Lacticaseibacillus paracasei (strain ATCC 334 / BCRC 17002 / CCUG 31169 / CIP 107868 / KCTC 3260 / NRRL B-441) (Lactobacillus paracasei).